A 323-amino-acid polypeptide reads, in one-letter code: UPF0200/UPF0201 protein AF_1395 (323 aa).

Residues 1–185 are UPF0200; that stretch reads MVLEMKVIAF…EKIRQILLKL (185 aa). 12-19 contributes to the ATP binding site; the sequence is GYPLSGKS. The segment at 186-323 is UPF0201; that stretch reads AKNVEIEIRT…GRPVKEIDKL (138 aa).

In the N-terminal section; belongs to the UPF0200 family. It in the C-terminal section; belongs to the UPF0201 family.

The sequence is that of UPF0200/UPF0201 protein AF_1395 from Archaeoglobus fulgidus (strain ATCC 49558 / DSM 4304 / JCM 9628 / NBRC 100126 / VC-16).